A 200-amino-acid polypeptide reads, in one-letter code: TATA-box-binding protein 2 (200 aa).

A run of 2 repeats spans residues 25-101 (LQNI…ARIV) and 115-192 (IQNI…YPVL).

It belongs to the TBP family. In terms of assembly, belongs to the TFIID complex together with the TBP-associated factors (TAFs). Binds DNA as monomer. Interacts with TAF1 (via N-terminus). Interacts with TFIIB1. Interacts with PTF2. Interacts with HAT5/ATHB-1 and ATHB-7. Component of a nuclear protein complex containing at least TATA binding proteins (TBPs, e.g. TBP1 and TBP2) and ATX1.

It localises to the nucleus. In terms of biological role, general transcription factor (GTF) that functions at the core of the DNA-binding multiprotein factor TFIID. Binding of TFIID to the TATA box is the initial transcriptional step of the pre-initiation complex (PIC), playing a role in the activation of eukaryotic genes transcribed by RNA polymerase II. Interacts with TFIIB1 and is required for activated transcription and possibly basal transcription. May act as GTF of RNA polymerase I-dependent transcription and rRNA synthesis. Forms a ternary complex with PBRP1 and the rDNA promoter region. In Arabidopsis thaliana (Mouse-ear cress), this protein is TATA-box-binding protein 2.